We begin with the raw amino-acid sequence, 276 residues long: Alpha N-terminal protein methyltransferase 1 (276 aa).

The segment at 1-57 (MTTTLEEQLSDKLQMMDETTDKVQGSSKQKDDSSIAASSDAKTASPSSSDSSTKVAA) is disordered. A compositionally biased stretch (low complexity) spans 34–57 (SIAASSDAKTASPSSSDSSTKVAA). Residues Gly-114, Arg-119, 136 to 138 (EQD), 167 to 168 (LQ), and Gln-182 contribute to the S-adenosyl-L-methionine site.

The protein belongs to the methyltransferase superfamily. NTM1 family.

It catalyses the reaction N-terminal L-alanyl-L-prolyl-L-lysyl-[protein] + 3 S-adenosyl-L-methionine = N-terminal N,N,N-trimethyl-L-alanyl-L-prolyl-L-lysyl-[protein] + 3 S-adenosyl-L-homocysteine + 3 H(+). The enzyme catalyses N-terminal L-seryl-L-prolyl-L-lysyl-[protein] + 3 S-adenosyl-L-methionine = N-terminal N,N,N-trimethyl-L-seryl-L-prolyl-L-lysyl-[protein] + 3 S-adenosyl-L-homocysteine + 3 H(+). The catalysed reaction is N-terminal L-prolyl-L-prolyl-L-lysyl-[protein] + 2 S-adenosyl-L-methionine = N-terminal N,N-dimethyl-L-prolyl-L-prolyl-L-lysyl-[protein] + 2 S-adenosyl-L-homocysteine + 2 H(+). Its function is as follows. Alpha-N-methyltransferase that methylates the N-terminus of target proteins containing the N-terminal motif [Ala/Pro/Ser]-Pro-Lys when the initiator Met is cleaved. Specifically catalyzes mono-, di- or tri-methylation of exposed alpha-amino group of Ala or Ser residue in the [Ala/Ser]-Pro-Lys motif and mono- or di-methylation of Pro in the Pro-Pro-Lys motif. The chain is Alpha N-terminal protein methyltransferase 1 (Ntmt) from Drosophila melanogaster (Fruit fly).